A 450-amino-acid chain; its full sequence is UDP-N-acetylmuramoylalanine--D-glutamate ligase (450 aa).

Position 119–125 (119–125) interacts with ATP; it reads GSNGKTT.

The protein belongs to the MurCDEF family.

The protein resides in the cytoplasm. The catalysed reaction is UDP-N-acetyl-alpha-D-muramoyl-L-alanine + D-glutamate + ATP = UDP-N-acetyl-alpha-D-muramoyl-L-alanyl-D-glutamate + ADP + phosphate + H(+). It functions in the pathway cell wall biogenesis; peptidoglycan biosynthesis. In terms of biological role, cell wall formation. Catalyzes the addition of glutamate to the nucleotide precursor UDP-N-acetylmuramoyl-L-alanine (UMA). This chain is UDP-N-acetylmuramoylalanine--D-glutamate ligase, found in Bacillus thuringiensis (strain Al Hakam).